The following is a 342-amino-acid chain: MNFDQKGLKKRSITVAYFFEHIQKRFDIKFRRLNELDEQKCRIHERDLHRPGLAIAGFTKLFTYKRVQILGNTETRYLNHLSDEERKTAFANFVSFRMPCIILTSNNKLDQELVDMATGAGIPVFITRCSSTKTIYYITDFLDEEFSLYQQYHGSMIDVYGVGVLLTGKSGLGKSEVALDLIERGHGLVADDVVVVKRKGETKTLVASRNNIIDHFMEIRGLGVVDVRQNFGIRAIRDRKEVQVVVELLEWSKESEYERLGLDQKMVKLLGVDLPLVQLPIFPGKNITAIIEVVALNFLLKHYAGYVPAEALTERIRNVINKERAKAPAPSTSFEEYNDEND.

Residues H153 and K174 contribute to the active site. 168 to 175 (GKSGLGKS) contacts ATP. Residue S175 participates in Mg(2+) binding. The Proton acceptor; for phosphorylation activity. Proton donor; for dephosphorylation activity role is filled by D192. Positions 217–226 (MEIRGLGVVD) are important for the catalytic mechanism of both phosphorylation and dephosphorylation. Position 218 (E218) interacts with Mg(2+). The active site involves R259. An important for the catalytic mechanism of dephosphorylation region spans residues 280 to 285 (PIFPGK).

Belongs to the HPrK/P family. In terms of assembly, homohexamer. Mg(2+) is required as a cofactor.

It catalyses the reaction [HPr protein]-L-serine + ATP = [HPr protein]-O-phospho-L-serine + ADP + H(+). It carries out the reaction [HPr protein]-O-phospho-L-serine + phosphate + H(+) = [HPr protein]-L-serine + diphosphate. Catalyzes the ATP- as well as the pyrophosphate-dependent phosphorylation of a specific serine residue in HPr, a phosphocarrier protein of the phosphoenolpyruvate-dependent sugar phosphotransferase system (PTS). HprK/P also catalyzes the pyrophosphate-producing, inorganic phosphate-dependent dephosphorylation (phosphorolysis) of seryl-phosphorylated HPr (P-Ser-HPr). The chain is HPr kinase/phosphorylase from Chlorobaculum tepidum (strain ATCC 49652 / DSM 12025 / NBRC 103806 / TLS) (Chlorobium tepidum).